The chain runs to 224 residues: Claudin-17 (224 aa).

Topologically, residues 1–7 (MAFYPLQ) are cytoplasmic. The helical transmembrane segment at 8–28 (IAGLVLGFLGMVGTLATTLLP) threads the bilayer. Topologically, residues 29 to 81 (QWRVSAFVGSNIIVFERLWEGLWMNCIRQARVRLQCKFYSSLLALPPALETAR) are extracellular. A helical membrane pass occupies residues 82-102 (ALMCVAVALSLIALLIGICGM). The Cytoplasmic portion of the chain corresponds to 103 to 124 (KQVQCTGSNERAKAYLLGTSGV). The helical transmembrane segment at 125–145 (LFILTGIFVLIPVSWTANIII) threads the bilayer. At 146-164 (RDFYNPAIHIGQKRELGAA) the chain is on the extracellular side. The helical transmembrane segment at 165–185 (LFLGWASAAVLFIGGGLLCGF) threads the bilayer. Over 186–224 (CCCNRKKQGYRYPVPGYRVPHTDKRRNTTMLSKTSTSYV) the chain is Cytoplasmic.

Belongs to the claudin family. In terms of assembly, cannot form tight junction strands on its own. Interacts with OCLN. In terms of tissue distribution, in the kidney, expressed in the proximal tubule and in the Henle's loop. In the distal convoluted tubule, not expressed in all tubules. Not detected in the collecting duct (at protein level).

It is found in the cell junction. The protein localises to the tight junction. It localises to the basolateral cell membrane. The catalysed reaction is chloride(in) = chloride(out). The enzyme catalyses hydrogencarbonate(in) = hydrogencarbonate(out). It carries out the reaction bromide(in) = bromide(out). It catalyses the reaction iodide(out) = iodide(in). The catalysed reaction is fluoride(in) = fluoride(out). The enzyme catalyses nitrate(in) = nitrate(out). It carries out the reaction thiocyanate(in) = thiocyanate(out). In terms of biological role, channel-forming tight junction protein with selectivity for anions, including chloride and hydrogencarbonate, and for solutes smaller than 9 Angstrom in diameter. In the kidney proximal tubule, may be involved in paracellular reabsorption of filtered anions. Does not affect water permeability. The sequence is that of Claudin-17 (CLDN17) from Homo sapiens (Human).